The primary structure comprises 55 residues: Large ribosomal subunit protein uL30 (55 aa).

The protein belongs to the universal ribosomal protein uL30 family. Part of the 50S ribosomal subunit.

Its function is as follows. Binds the 5S and 23S rRNAs. The protein is Large ribosomal subunit protein uL30 of Deinococcus radiodurans (strain ATCC 13939 / DSM 20539 / JCM 16871 / CCUG 27074 / LMG 4051 / NBRC 15346 / NCIMB 9279 / VKM B-1422 / R1).